The primary structure comprises 197 residues: MPRPQKCRAIAQDPEYRVFGPFCVGKREDEALVMSFDEFEAIRLADVEGLYQEEAARQMQISRQTFGNILASARKKLGEMLVLGKMLNVKGGNIMISQEERIFGCAACGHQWSLPYGIARPVECPSCSSQNIHRMSPGGGFGGGRRGGGKCRGFRSGLDRGPGHGEGRCQGEGHGNGNGNGNGQGRMRRNQQEGGEV.

Residues glycine 138–valine 197 are disordered. Over residues glycine 157–glycine 171 the composition is skewed to basic and acidic residues. The span at glutamate 172–glutamine 184 shows a compositional bias: gly residues.

The protein belongs to the UPF0251 family.

This Chlorobaculum tepidum (strain ATCC 49652 / DSM 12025 / NBRC 103806 / TLS) (Chlorobium tepidum) protein is UPF0251 protein CT1277.